We begin with the raw amino-acid sequence, 517 residues long: Glucose-6-phosphate isomerase (517 aa).

The Proton donor role is filled by Glu-345. Active-site residues include His-376 and Lys-490.

It belongs to the GPI family.

The protein resides in the cytoplasm. The enzyme catalyses alpha-D-glucose 6-phosphate = beta-D-fructose 6-phosphate. It participates in carbohydrate biosynthesis; gluconeogenesis. Its pathway is carbohydrate degradation; glycolysis; D-glyceraldehyde 3-phosphate and glycerone phosphate from D-glucose: step 2/4. Functionally, catalyzes the reversible isomerization of glucose-6-phosphate to fructose-6-phosphate. The protein is Glucose-6-phosphate isomerase of Erythrobacter litoralis (strain HTCC2594).